We begin with the raw amino-acid sequence, 136 residues long: Large ribosomal subunit protein uL16 (136 aa).

It belongs to the universal ribosomal protein uL16 family. Part of the 50S ribosomal subunit.

Its function is as follows. Binds 23S rRNA and is also seen to make contacts with the A and possibly P site tRNAs. This is Large ribosomal subunit protein uL16 from Shewanella baltica (strain OS155 / ATCC BAA-1091).